Here is a 307-residue protein sequence, read N- to C-terminus: MRLQRKDLLGLKDLSAEEIELILETAAPMKEILGRDIKKVPTLRGKLVVTMFYEPSTRTRTSFELAAKYMGADTMSIATATSSVQKGESLRDTARTLAAMGTDAVIIRHSAAGSPALLARTIEASVLNGGDGMHEHPTQALLDMFTIKEKLGGFKGLKVAILGDILHSRVARSNIWGLTKMGAEVRVVGPATLIPPEIENLGVKVYYNAEEALKGVDVINVLRIQRERQKKGLFPSLREYARLYELTPERLKLARPGALVLHPGPMNRGIEIAPAVADGLQAAITEQVTNGVAVRMALLYLLIGGAN.

Arginine 58 and threonine 59 together coordinate carbamoyl phosphate. Lysine 86 provides a ligand contact to L-aspartate. Residues arginine 108, histidine 136, and glutamine 139 each coordinate carbamoyl phosphate. Arginine 169 and arginine 223 together coordinate L-aspartate. Positions 264 and 265 each coordinate carbamoyl phosphate.

Belongs to the aspartate/ornithine carbamoyltransferase superfamily. ATCase family. Heterododecamer (2C3:3R2) of six catalytic PyrB chains organized as two trimers (C3), and six regulatory PyrI chains organized as three dimers (R2).

It catalyses the reaction carbamoyl phosphate + L-aspartate = N-carbamoyl-L-aspartate + phosphate + H(+). Its pathway is pyrimidine metabolism; UMP biosynthesis via de novo pathway; (S)-dihydroorotate from bicarbonate: step 2/3. In terms of biological role, catalyzes the condensation of carbamoyl phosphate and aspartate to form carbamoyl aspartate and inorganic phosphate, the committed step in the de novo pyrimidine nucleotide biosynthesis pathway. In Moorella thermoacetica (strain ATCC 39073 / JCM 9320), this protein is Aspartate carbamoyltransferase catalytic subunit.